A 244-amino-acid polypeptide reads, in one-letter code: Transforming protein v-Fos/v-Fox (244 aa).

The tract at residues 1-236 (DSLSYYHSPA…LFPASSGHSG (236 aa)) is transforming protein v-Fos. The 64-residue stretch at 113 to 176 (EVKRRIRRER…EKLEFILAAH (64 aa)) folds into the bZIP domain. Residues 115 to 135 (KRRIRRERNKMAAAKCRNRRR) are basic motif. Residues 141 to 169 (LQAETDQLEDEKSALQTEIANLLKEKEKL) form a leucine-zipper region. The tract at residues 237-244 (FISMAGWQ) is transforming protein v-Fox.

The protein belongs to the bZIP family. Fos subfamily.

It localises to the host nucleus. The polypeptide is Transforming protein v-Fos/v-Fox (FOS-FOX) (Mus musculus (Mouse)).